The primary structure comprises 540 residues: ATP-dependent RNA helicase DBP3 (540 aa).

Over residues 1-35 (MTVEESKKRKLTDDVAIKQNEKKIKKDKKVKDKKD) the composition is skewed to basic and acidic residues. The segment at 1–89 (MTVEESKKRK…TTEQPSKQVK (89 aa)) is disordered. Basic residues predominate over residues 36-52 (KKDKKDKKDKKEKKEKK). Basic and acidic residues-rich tracts occupy residues 53-62 (EKKEKNDKKD) and 68-79 (DKKAEQVDKLSE). Positions 130 to 156 (LAFNQISLDKEVQNEIAKFPKPTPIQA) match the Q motif motif. Positions 159 to 332 (WPYLLSGKDV…STFMKEPVKV (174 aa)) constitute a Helicase ATP-binding domain. 172-179 (AETGSGKT) serves as a coordination point for ATP. The DEAD box motif lies at 279–282 (DEAD). Residues 361-510 (KLLDLLKKYQ…PVPEDLIKFG (150 aa)) form the Helicase C-terminal domain.

It belongs to the DEAD box helicase family. DDX5/DBP2 subfamily.

Its subcellular location is the nucleus. The protein resides in the nucleolus. It carries out the reaction ATP + H2O = ADP + phosphate + H(+). Functionally, ATP-dependent RNA helicase required for 60S ribosomal subunit synthesis. Involved in efficient pre-rRNA processing, predominantly at site A3, which is necessary for the normal formation of 25S and 5.8S rRNAs. The chain is ATP-dependent RNA helicase DBP3 (DBP3) from Candida glabrata (strain ATCC 2001 / BCRC 20586 / JCM 3761 / NBRC 0622 / NRRL Y-65 / CBS 138) (Yeast).